The primary structure comprises 637 residues: Chaperone protein DnaK (637 aa).

Phosphothreonine; by autocatalysis is present on T198. The segment at 597 to 637 (MYQQAAQESGQTEGAAQDPKGAAQDDDVVDADFEEVKDHKK) is disordered. Residues 600 to 610 (QAAQESGQTEG) show a composition bias toward polar residues. Acidic residues predominate over residues 620–629 (QDDDVVDADF).

This sequence belongs to the heat shock protein 70 family.

Acts as a chaperone. This chain is Chaperone protein DnaK, found in Desulforapulum autotrophicum (strain ATCC 43914 / DSM 3382 / VKM B-1955 / HRM2) (Desulfobacterium autotrophicum).